The sequence spans 128 residues: MARRPRAKKKERKNIETGVAHIKSTFNNTVITISDVRGNAISWSSAGTVGFKGSRKSTPFAAQLAAEKAAREAMEHGMREVAVMVKGPGAGREAAIRSLQAAGLEVSLIKDVTPIPHNGCRPPKRRRV.

The protein belongs to the universal ribosomal protein uS11 family. In terms of assembly, part of the 30S ribosomal subunit. Interacts with proteins S7 and S18. Binds to IF-3.

Located on the platform of the 30S subunit, it bridges several disparate RNA helices of the 16S rRNA. Forms part of the Shine-Dalgarno cleft in the 70S ribosome. The protein is Small ribosomal subunit protein uS11 of Desulforudis audaxviator (strain MP104C).